We begin with the raw amino-acid sequence, 235 residues long: U1 small nuclear ribonucleoprotein C (235 aa).

The segment at 4–36 (YYCEYCDIYLTHSSPVGRRQHIHGRKHISAKIE) adopts a Matrin-type zinc-finger fold. The tract at residues 131–235 (QAHNNYSYPN…SKEHIESDIS (105 aa)) is disordered. Low complexity predominate over residues 134 to 168 (NNYSYPNSINPSNQINYSNNYGSNNFNNSNEFNKN). The segment covering 169–189 (MNEKDNINNNDIHDNKVKTDE) has biased composition (basic and acidic residues). Over residues 192-203 (PINNDNLNNTRN) the composition is skewed to low complexity. Composition is skewed to basic and acidic residues over residues 205-217 (SYEE…DHKK) and 225-235 (NSKEHIESDIS).

This sequence belongs to the U1 small nuclear ribonucleoprotein C family. As to quaternary structure, U1 snRNP is composed of the 7 core Sm proteins B/B', D1, D2, D3, E, F and G that assemble in a heptameric protein ring on the Sm site of the small nuclear RNA to form the core snRNP, and at least 3 U1 snRNP-specific proteins U1-70K, U1-A and U1-C. U1-C interacts with U1 snRNA and the 5' splice-site region of the pre-mRNA.

The protein localises to the nucleus. Component of the spliceosomal U1 snRNP, which is essential for recognition of the pre-mRNA 5' splice-site and the subsequent assembly of the spliceosome. U1-C is directly involved in initial 5' splice-site recognition for both constitutive and regulated alternative splicing. The interaction with the 5' splice-site seems to precede base-pairing between the pre-mRNA and the U1 snRNA. Stimulates commitment or early (E) complex formation by stabilizing the base pairing of the 5' end of the U1 snRNA and the 5' splice-site region. The polypeptide is U1 small nuclear ribonucleoprotein C (Plasmodium falciparum (isolate 3D7)).